Consider the following 547-residue polypeptide: Chaperonin GroEL (547 aa).

ATP is bound by residues 30 to 33 (TLGP), Lys-51, 87 to 91 (DGTTT), Gly-415, and Asp-496. Residues 527 to 547 (KKDSPAMPGGGGMGGMGGMDF) are disordered. Gly residues predominate over residues 534–547 (PGGGGMGGMGGMDF).

The protein belongs to the chaperonin (HSP60) family. Forms a cylinder of 14 subunits composed of two heptameric rings stacked back-to-back. Interacts with the co-chaperonin GroES.

Its subcellular location is the cytoplasm. The catalysed reaction is ATP + H2O + a folded polypeptide = ADP + phosphate + an unfolded polypeptide.. In terms of biological role, together with its co-chaperonin GroES, plays an essential role in assisting protein folding. The GroEL-GroES system forms a nano-cage that allows encapsulation of the non-native substrate proteins and provides a physical environment optimized to promote and accelerate protein folding. This Methylocella silvestris (strain DSM 15510 / CIP 108128 / LMG 27833 / NCIMB 13906 / BL2) protein is Chaperonin GroEL.